Consider the following 346-residue polypeptide: Biotin synthase (346 aa).

Residues 38–256 enclose the Radical SAM core domain; the sequence is RQVQVSTLLS…IAVARIMMPT (219 aa). [4Fe-4S] cluster is bound by residues C53, C57, and C60. C97, C128, C188, and R260 together coordinate [2Fe-2S] cluster.

This sequence belongs to the radical SAM superfamily. Biotin synthase family. Homodimer. [4Fe-4S] cluster serves as cofactor. Requires [2Fe-2S] cluster as cofactor.

It carries out the reaction (4R,5S)-dethiobiotin + (sulfur carrier)-SH + 2 reduced [2Fe-2S]-[ferredoxin] + 2 S-adenosyl-L-methionine = (sulfur carrier)-H + biotin + 2 5'-deoxyadenosine + 2 L-methionine + 2 oxidized [2Fe-2S]-[ferredoxin]. The protein operates within cofactor biosynthesis; biotin biosynthesis; biotin from 7,8-diaminononanoate: step 2/2. Its function is as follows. Catalyzes the conversion of dethiobiotin (DTB) to biotin by the insertion of a sulfur atom into dethiobiotin via a radical-based mechanism. The polypeptide is Biotin synthase (Shigella boydii serotype 18 (strain CDC 3083-94 / BS512)).